We begin with the raw amino-acid sequence, 298 residues long: N-acetylmuramic acid 6-phosphate etherase (298 aa).

The SIS domain occupies 55–218; it reads AANRYKKGGR…STGVMIRQGK (164 aa). The active-site Proton donor is E83. E114 is an active-site residue.

It belongs to the GCKR-like family. MurNAc-6-P etherase subfamily. As to quaternary structure, homodimer.

The enzyme catalyses N-acetyl-D-muramate 6-phosphate + H2O = N-acetyl-D-glucosamine 6-phosphate + (R)-lactate. It functions in the pathway amino-sugar metabolism; N-acetylmuramate degradation. Its function is as follows. Specifically catalyzes the cleavage of the D-lactyl ether substituent of MurNAc 6-phosphate, producing GlcNAc 6-phosphate and D-lactate. The chain is N-acetylmuramic acid 6-phosphate etherase from Lactobacillus acidophilus (strain ATCC 700396 / NCK56 / N2 / NCFM).